Here is a 482-residue protein sequence, read N- to C-terminus: E3 ubiquitin-protein ligase parkin (482 aa).

The region spanning 30–99 is the Ubiquitin-like domain; that stretch reads LSIYVKTNTG…LGQQSVLHAI (70 aa). A Phosphoserine; by Pink1 modification is found at S94. The RING-type 0; atypical zinc-finger motif lies at 157–246; that stretch reads AHFFVHCSQC…SGGEKDFAAP (90 aa). Residues C163, C166, C178, and C181 each contribute to the Zn(2+) site. Residue T187 is modified to Phosphothreonine; by Pink1. Zn(2+)-binding residues include C208, C232, H235, C259, C262, C274, H278, C281, C284, C310, C314, C353, C358, C373, C377, C382, C385, H390, C394, C436, and C439. The interval 255-482 is TRIAD supradomain; that stretch reads KNVPCLACTD…RDCMGAHWFG (228 aa). An RING-type 1 zinc finger spans residues 259–314; that stretch reads CLACTDVSDTVLVFPCASQHVTCIDCFRHYCRSRLGERQFMPHPDFGYTLPCPAGC. 2 IBR-type zinc fingers span residues 334-394 and 432-473; these read DRYQ…IGEC and STKP…EWTR. The RING-type 2; atypical zinc finger occupies 436 to 467; the sequence is CPKCRTPTERDGGCMHMVCTRAGCGFEWCWVC. Residue C449 is part of the active site. Residues C454, C459, C464, C467, C475, and H479 each coordinate Zn(2+).

It belongs to the RBR family. Parkin subfamily. In terms of assembly, forms an E3 ubiquitin ligase complex with E2 ubiquitin-conjugating enzymes. Interacts with Pink1. Interacts with Marf. Interacts with Paris. Interacts with septins Septin1 and pnut. Post-translationally, auto-ubiquitinates in an E2-dependent manner leading to its own degradation. In terms of processing, phosphorylated. Activation requires phosphorylation at Ser-94 by Pink1 and binding to Pink1-phosphorylated polyubiquitin chains. Phosphorylation at Thr-187 by Pink1 is also important for mitochondrial localization. In oocytes, accumulates in early egg chambers where it is enriched until stages 9-10, localizing mainly to the posterior pole and anterior margin (at protein level). After stage 10 it is no longer detected in the oocyte (at protein level). In embryos, ubiquitously expressed in the early stages (stages 2 to 5) (at protein level). Expression levels decrease at later stages and becomes restricted to the brain and nerve cord from stage 9 (at protein level). Relatively higher levels of expression in the head compared to the body. Enriched in the dorsomedial (DM) dopaminergic neurons.

The protein localises to the mitochondrion. Its subcellular location is the cytoplasm. It localises to the cytosol. The enzyme catalyses [E2 ubiquitin-conjugating enzyme]-S-ubiquitinyl-L-cysteine + [acceptor protein]-L-lysine = [E2 ubiquitin-conjugating enzyme]-L-cysteine + [acceptor protein]-N(6)-ubiquitinyl-L-lysine.. The protein operates within protein modification; protein ubiquitination. In the autoinhibited state the side chain of Phe-481 inserts into a hydrophobic groove in RING-0, occluding the ubiquitin acceptor site Cys-449, whereas the REP repressor element binds RING-1 and blocks its E2-binding site. Activation of park requires 2 steps: (1) phosphorylation at Ser-94 by Pink1 and (2) binding to phosphorylated ubiquitin, leading to unlock repression of the catalytic Cys-449 by the RING-0 region via an allosteric mechanism and converting park to its fully-active form. According to another report, phosphorylation at Ser-94 by Pink1 is not essential for activation and only binding to phosphorylated ubiquitin is essential to unlock repression. Its function is as follows. E3 ubiquitin-protein ligase which accepts ubiquitin from E2 ubiquitin-conjugating enzymes in the form of a thioester and then directly transfers the ubiquitin to targeted substrates, such as Paris, Marf, Opa1, Miro, pnut, Septin1, Tom20 and porin. Mediates monoubiquitination as well as 'Lys-6', 'Lys-11', 'Lys-48'-linked and 'Lys-63'-linked polyubiquitination of substrates, depending on the context. Protects against mitochondrial dysfunction during cellular stress, by acting downstream of Pink1, to coordinate mitochondrial quality control mechanisms that remove and replace dysfunctional mitochondrial components. Depending on the severity of mitochondrial damage and/or dysfunction, activity ranges from preventing apoptosis and stimulating mitochondrial biogenesis to regulating mitochondrial dynamics and eliminating severely damaged mitochondria via mitophagy. Appears to be particularly important in maintaining the physiology and function of cells with high energy demands that are undergoing stress or altered metabolic environment, including spermatids, muscle cells and neurons such as the dopaminergic (DA) neurons. Activation and recruitment onto the outer membrane of damaged/dysfunctional mitochondria (OMM) requires Pink1-mediated phosphorylation of both park and ubiquitin. In depolarized mitochondria, mediates the decision between mitophagy or preventing apoptosis by inducing either the poly- or monoubiquitination of porin/VDAC; polyubiquitination of porin promotes mitophagy, while monoubiquitination of porin decreases mitochondrial calcium influx which ultimately inhibits apoptosis. When cellular stress results in irreversible mitochondrial damage, promotes the autophagic degradation of dysfunctional depolarized mitochondria (mitophagy) by promoting the ubiquitination of mitochondrial proteins. Preferentially assembles 'Lys-6'-, 'Lys-11'- and 'Lys-63'-linked polyubiquitin chains following mitochondrial damage, leading to mitophagy. In developing tissues, inhibits JNK-mediated apoptosis by negatively regulating bsk transcription. The Pink1-park pathway also promotes fission and/or inhibits fusion of damaged mitochondria by mediating the ubiquitination and subsequent degradation of proteins involved in mitochondrial fusion/fission such as Marf, Opa1 and fzo. This prevents the refusion of unhealthy mitochondria with the healthy mitochondrial network and/or initiates mitochondrial fragmentation facilitating their later engulfment by autophagosomes. Regulates motility of damaged mitochondria by phosphorylating Miro which likely promotes its park-dependent degradation by the proteasome; in motor neurons, this inhibits mitochondrial intracellular anterograde transport along the axons which probably increases the chance of the mitochondria being eliminated in the soma. The Pink1-park pathway is also involved in mitochondrial regeneration processes such as promoting mitochondrial biogenesis, activating localized mitochondrial repair, promoting selective turnover of mitochondrial proteins and initiating the mitochondrial import of endogenous proteins. Involved in mitochondrial biogenesis via the ubiquitination of transcriptional repressor Paris which leads to its subsequent proteasomal degradation and allows activation of the transcription factor srl. Promotes localized mitochondrial repair by activating the translation of specific nuclear-encoded mitochondrial RNAs (nc-mtRNAs) on the mitochondrial surface, including several key electron transport chain component nc-mtRNAs. The polypeptide is E3 ubiquitin-protein ligase parkin (Drosophila melanogaster (Fruit fly)).